We begin with the raw amino-acid sequence, 238 residues long: Peroxisomal biogenesis factor 11 (238 aa).

This sequence belongs to the peroxin-11 family.

It localises to the mitochondrion. Its subcellular location is the peroxisome membrane. Involved in peroxisomal proliferation. Promotes peroxisome division and biogenesis. This is Peroxisomal biogenesis factor 11 (pex11) from Schizosaccharomyces pombe (strain 972 / ATCC 24843) (Fission yeast).